Here is a 273-residue protein sequence, read N- to C-terminus: Dermonecrotic toxin LruSicTox-alphaIC1d (273 aa).

His5 is a catalytic residue. Mg(2+) is bound by residues Glu25 and Asp27. Catalysis depends on His41, which acts as the Nucleophile. Intrachain disulfides connect Cys45/Cys51 and Cys47/Cys190. Residue Asp85 participates in Mg(2+) binding.

The protein belongs to the arthropod phospholipase D family. Class II subfamily. Mg(2+) serves as cofactor. In terms of tissue distribution, expressed by the venom gland.

Its subcellular location is the secreted. It catalyses the reaction an N-(acyl)-sphingosylphosphocholine = an N-(acyl)-sphingosyl-1,3-cyclic phosphate + choline. It carries out the reaction an N-(acyl)-sphingosylphosphoethanolamine = an N-(acyl)-sphingosyl-1,3-cyclic phosphate + ethanolamine. The enzyme catalyses a 1-acyl-sn-glycero-3-phosphocholine = a 1-acyl-sn-glycero-2,3-cyclic phosphate + choline. The catalysed reaction is a 1-acyl-sn-glycero-3-phosphoethanolamine = a 1-acyl-sn-glycero-2,3-cyclic phosphate + ethanolamine. Its function is as follows. Dermonecrotic toxins cleave the phosphodiester linkage between the phosphate and headgroup of certain phospholipids (sphingolipid and lysolipid substrates), forming an alcohol (often choline) and a cyclic phosphate. This toxin acts on sphingomyelin (SM). It may also act on ceramide phosphoethanolamine (CPE), lysophosphatidylcholine (LPC) and lysophosphatidylethanolamine (LPE), but not on lysophosphatidylserine (LPS), and lysophosphatidylglycerol (LPG). It acts by transphosphatidylation, releasing exclusively cyclic phosphate products as second products. Induces dermonecrosis, hemolysis, increased vascular permeability, edema, inflammatory response, and platelet aggregation. The protein is Dermonecrotic toxin LruSicTox-alphaIC1d of Loxosceles rufescens (Mediterranean recluse spider).